The sequence spans 642 residues: MPVITLPDGSKREFAHAVSTLDVAADIGPGLAKACIAGRVNGELKDACDLIETDAELSIITAKDEEGVEILRHSCAHLLGHAIKQMWPETKMAIGPVIDNGFYYDIDLEHKLTQDDIEALEKRMLQLAKTNYDVVKRVVSWQEARDTFAARGEEYKIAILDENISKDATPALYHHEEYTDMCRGPHVPNMRFCQHFKLMSIAGAYWRGNSENKMLQRIYGTAWADKKALSTHLTRLEEAAKRDHRKIGKQLDLYHMQEEAPGMVFWHNDGWSIFLELERFIRRKLNQYTYQEVKGPLMMDRVLWERSGHWDKYSEAMFTTSSENREYAIKPMNCPGHVQIFNQGLKSYRDLPLRMAEFGCCHRNEPSGSLHGLMRVRGFTQDDAHIFCTDDQVQEEVSACIQMVYDTYSTFGFENIVVKLSTRPEKRIGDDAMWDRAEEALKQALRANNIEFTLLPGEGAFYGPKIEFTLHDCLDRAWQCGTVQLDYALPSRLGATYVAEDNSRQTPVMIHRAILGSLERFLGILIEEYAGRFPTWLAPMQVVVMNITDKQADYVQEIVKFFKEQGIRASFDLRNEKIGFKIREHTLRRVPYLLVVGDQEMENKEVAVRTRDGIDLGKMRLEDFATKIHQQISLRSLKLLEE.

Residues 1–61 (MPVITLPDGS…ETDAELSIIT (61 aa)) enclose the TGS domain. Residues 243–534 (DHRKIGKQLD…LIEEYAGRFP (292 aa)) form a catalytic region. Zn(2+) contacts are provided by Cys334, His385, and His511.

This sequence belongs to the class-II aminoacyl-tRNA synthetase family. In terms of assembly, homodimer. It depends on Zn(2+) as a cofactor.

It is found in the cytoplasm. It catalyses the reaction tRNA(Thr) + L-threonine + ATP = L-threonyl-tRNA(Thr) + AMP + diphosphate + H(+). Catalyzes the attachment of threonine to tRNA(Thr) in a two-step reaction: L-threonine is first activated by ATP to form Thr-AMP and then transferred to the acceptor end of tRNA(Thr). Also edits incorrectly charged L-seryl-tRNA(Thr). The protein is Threonine--tRNA ligase of Shewanella putrefaciens (strain CN-32 / ATCC BAA-453).